Here is a 550-residue protein sequence, read N- to C-terminus: Mitochondrial distribution and morphology protein 34 (550 aa).

An SMP-LTD domain is found at M1 to H208. Disordered stretches follow at residues V294–S313, R358–Q505, and V519–S550. The span at S300 to L310 shows a compositional bias: low complexity. A compositionally biased stretch (basic residues) spans A364–R376. Polar residues-rich tracts occupy residues M391–D407 and A458–R467. The segment covering S481–R495 has biased composition (basic and acidic residues).

This sequence belongs to the MDM34 family. In terms of assembly, component of the ER-mitochondria encounter structure (ERMES) or MDM complex, composed of MMM1, MDM10, MDM12 and MDM34.

It localises to the mitochondrion outer membrane. In terms of biological role, component of the ERMES/MDM complex, which serves as a molecular tether to connect the endoplasmic reticulum (ER) and mitochondria. Components of this complex are involved in the control of mitochondrial shape and protein biogenesis, and function in nonvesicular lipid trafficking between the ER and mitochondria. MDM34 is required for the interaction of the ER-resident membrane protein MMM1 and the outer mitochondrial membrane-resident beta-barrel protein MDM10. In Pyricularia oryzae (strain 70-15 / ATCC MYA-4617 / FGSC 8958) (Rice blast fungus), this protein is Mitochondrial distribution and morphology protein 34.